A 383-amino-acid polypeptide reads, in one-letter code: ATP phosphoribosyltransferase regulatory subunit (383 aa).

It belongs to the class-II aminoacyl-tRNA synthetase family. HisZ subfamily. As to quaternary structure, heteromultimer composed of HisG and HisZ subunits.

It localises to the cytoplasm. The protein operates within amino-acid biosynthesis; L-histidine biosynthesis; L-histidine from 5-phospho-alpha-D-ribose 1-diphosphate: step 1/9. In terms of biological role, required for the first step of histidine biosynthesis. May allow the feedback regulation of ATP phosphoribosyltransferase activity by histidine. The protein is ATP phosphoribosyltransferase regulatory subunit of Lactiplantibacillus plantarum (strain ATCC BAA-793 / NCIMB 8826 / WCFS1) (Lactobacillus plantarum).